Consider the following 214-residue polypeptide: tRNA (guanine-N(7)-)-methyltransferase (214 aa).

Positions 43, 68, 95, and 117 each coordinate S-adenosyl-L-methionine. Residue aspartate 117 is part of the active site. Substrate contacts are provided by residues lysine 121, aspartate 153, and 190–193 (TEYE).

It belongs to the class I-like SAM-binding methyltransferase superfamily. TrmB family.

It carries out the reaction guanosine(46) in tRNA + S-adenosyl-L-methionine = N(7)-methylguanosine(46) in tRNA + S-adenosyl-L-homocysteine. The protein operates within tRNA modification; N(7)-methylguanine-tRNA biosynthesis. Its function is as follows. Catalyzes the formation of N(7)-methylguanine at position 46 (m7G46) in tRNA. This is tRNA (guanine-N(7)-)-methyltransferase from Staphylococcus aureus (strain JH1).